The primary structure comprises 368 residues: COP9 signalosome complex subunit 5 (368 aa).

One can recognise an MPN domain in the interval 56–193; the sequence is IKISAIALLK…IGAFRTYPEG (138 aa). Zn(2+)-binding residues include histidine 139, histidine 141, and aspartate 152. A JAMM motif motif is present at residues 139 to 152; sequence HSHPGYGCWLSGID. The interval 347-368 is disordered; it reads TEPEKAGPSPSAPEPAVEMADA.

This sequence belongs to the peptidase M67A family. CSN5 subfamily. Component of the CSN complex, probably composed of csn-1, csn-2, csn-3, csn-4, csn-5, csn-6 and csn-7. Within the complex it probably interacts directly with csn-1. Interacts with glh-1 and glh-3. Interacts with lag-1. Interacts with kgb-1. A divalent metal cation is required as a cofactor.

It localises to the cytoplasm. The protein resides in the nucleus. Its function is as follows. Probable protease subunit of the COP9 signalosome complex (CSN), a complex involved in various cellular and developmental processes. The CSN complex is an essential regulator of the ubiquitin (Ubl) conjugation pathway by mediating the deneddylation of the cullin subunits of the SCF-type E3 ligase complexes, leading to decrease the Ubl ligase activity of SCF. In the complex, it probably acts as the catalytic center that mediates the cleavage of Nedd8 from cullins. It however has no metalloprotease activity by itself and requires the other subunits of the CSN complex. The CSN complex plays an essential role in embryogenesis and oogenesis and is required to regulate microtubule stability in the early embryo. Mediates mei-3/katanin targeting for degradation at the meiosis to mitosis transition via deneddylation of cul-3. May stabilize glh-1 protein levels by antagonizing kgb-1. The protein is COP9 signalosome complex subunit 5 (csn-5) of Caenorhabditis elegans.